The sequence spans 872 residues: Rho guanine nucleotide exchange factor scd1 (872 aa).

Residues 1 to 29 (MAYFQDRKTSSRSLPSYINHSTQNLVGPR) are disordered. Over residues 11-25 (SRSLPSYINHSTQNL) the composition is skewed to polar residues. The Calponin-homology (CH) domain occupies 82–198 (DSIHREALNS…TIELLLKKYE (117 aa)). Positions 228-402 (SGRRVTAELY…VRVANQVNET (175 aa)) constitute a DH domain. Positions 426-547 (SLQYFGQLLV…WMSVLNRLLW (122 aa)) constitute a PH domain. Disordered stretches follow at residues 553–667 (SPKD…STAS) and 743–765 (MKSD…STST). Residues 560-584 (AASTPANPVYNRSSSQTSKGYNSSD) are compositionally biased toward polar residues. Ser-583 is modified (phosphoserine). Over residues 599-616 (SPTSISSPSSKSSPFTKT) the composition is skewed to low complexity. Over residues 617–633 (TSKDTKSATTTDERPSD) the composition is skewed to basic and acidic residues. 2 stretches are compositionally biased toward low complexity: residues 645–667 (TSSL…STAS) and 748–765 (SLLP…STST). In terms of domain architecture, PB1 spans 772–859 (TTNVKIRLRL…FELMDPVHNK (88 aa)).

Scd1, scd2, cdc42, and ras1, in its GTP-bound state, act cooperatively to form a protein complex. Interacts with moe1 and cdc42.

The protein resides in the nucleus. It localises to the cytoplasm. Required for mating and morphogenesis. May contain a cryptic binding site for cdc42 that is enhanced by binding Ras. Interacts directly with scd2. Promotes the exchange of cdc42-bound GDP by GTP. Involved in septation and stimulates the elongation of conjugation tubes. This Schizosaccharomyces pombe (strain 972 / ATCC 24843) (Fission yeast) protein is Rho guanine nucleotide exchange factor scd1 (scd1).